A 393-amino-acid chain; its full sequence is NAD(P)H-quinone oxidoreductase subunit H, chloroplastic (393 aa).

The protein belongs to the complex I 49 kDa subunit family. As to quaternary structure, NDH is composed of at least 16 different subunits, 5 of which are encoded in the nucleus.

The protein resides in the plastid. It localises to the chloroplast thylakoid membrane. It carries out the reaction a plastoquinone + NADH + (n+1) H(+)(in) = a plastoquinol + NAD(+) + n H(+)(out). It catalyses the reaction a plastoquinone + NADPH + (n+1) H(+)(in) = a plastoquinol + NADP(+) + n H(+)(out). Its function is as follows. NDH shuttles electrons from NAD(P)H:plastoquinone, via FMN and iron-sulfur (Fe-S) centers, to quinones in the photosynthetic chain and possibly in a chloroplast respiratory chain. The immediate electron acceptor for the enzyme in this species is believed to be plastoquinone. Couples the redox reaction to proton translocation, and thus conserves the redox energy in a proton gradient. This is NAD(P)H-quinone oxidoreductase subunit H, chloroplastic from Lepidium virginicum (Virginia pepperweed).